The primary structure comprises 469 residues: Protein apterous (469 aa).

Disordered stretches follow at residues 21 to 44 (GPGAREKSPTPPVAHQGSNQCGSA) and 111 to 141 (EVSDETTSGISFKTEPFGPPSSPESTSDSKI). 2 LIM zinc-binding domains span residues 148 to 200 (CSGC…CKND) and 210 to 263 (CSRC…CRTH). The homeobox DNA-binding region spans 367 to 426 (TKRMRTSFKHHQLRTMKSYFAINHNPDAKDLKQLSQKTGLPKRVLQVWFQNARAKWRRMM).

In terms of tissue distribution, expressed in PNS and CNS.

The protein localises to the nucleus. Functionally, required for the normal development of the wing and halter imaginal disks. This is Protein apterous (ap) from Drosophila melanogaster (Fruit fly).